The primary structure comprises 113 residues: Nucleoid-associated protein sync_0026 (113 aa).

The protein belongs to the YbaB/EbfC family. Homodimer.

It is found in the cytoplasm. Its subcellular location is the nucleoid. Its function is as follows. Binds to DNA and alters its conformation. May be involved in regulation of gene expression, nucleoid organization and DNA protection. This is Nucleoid-associated protein sync_0026 from Synechococcus sp. (strain CC9311).